We begin with the raw amino-acid sequence, 302 residues long: Putative peptide permease protein BRA0407/BS1330_II0404 (302 aa).

Positions 1–22 are disordered; sequence MRSSIHASRLRKMGQSIPASTG. The next 6 membrane-spanning stretches (helical) occupy residues 38–58, 101–121, 147–167, 200–222, 230–250, and 268–288; these read IFGL…PLWL, LLVA…IGAI, IFLL…VVVI, AGLG…VVYA, ILLE…AASW, and WQWL…NFIG. The 192-residue stretch at 97-288 folds into the ABC transmembrane type-1 domain; the sequence is GRISLLVAVS…LAVLAINFIG (192 aa).

It belongs to the binding-protein-dependent transport system permease family. The complex is composed of two ATP-binding proteins (BRA0404 and BRA0405), two transmembrane proteins (BRA0407 and BRA0408) and a solute-binding protein (BRA0409).

Its subcellular location is the cell inner membrane. Its function is as follows. Probably part of an ABC transporter complex that could be involved in peptide import. Probably responsible for the translocation of the substrate across the membrane. This chain is Putative peptide permease protein BRA0407/BS1330_II0404, found in Brucella suis biovar 1 (strain 1330).